The chain runs to 511 residues: Coatomer subunit delta (511 aa).

Over residues 168–177 (QARRDAERQG) the composition is skewed to basic and acidic residues. The interval 168-196 (QARRDAERQGKKAPGFGGFGSSTVSGGST) is disordered. S223 is modified (phosphoserine). N6-acetyllysine occurs at positions 233 and 241. S244 bears the Phosphoserine mark. The region spanning 271–511 (MESVHMKIEE…TFLVDKYEIL (241 aa)) is the MHD domain. Residues K309 and K351 each carry the N6-acetyllysine modification. S493 is subject to Phosphoserine.

It belongs to the adaptor complexes medium subunit family. Delta-COP subfamily. In terms of assembly, oligomeric complex that consists of at least the alpha, beta, beta', gamma, delta, epsilon and zeta subunits. Ubiquitously expressed.

Its subcellular location is the cytoplasm. The protein localises to the golgi apparatus membrane. The protein resides in the cytoplasmic vesicle. It localises to the COPI-coated vesicle membrane. Its function is as follows. The coatomer is a cytosolic protein complex that binds to dilysine motifs and reversibly associates with Golgi non-clathrin-coated vesicles, which further mediate biosynthetic protein transport from the ER, via the Golgi up to the trans Golgi network. Coatomer complex is required for budding from Golgi membranes, and is essential for the retrograde Golgi-to-ER transport of dilysine-tagged proteins. In mammals, the coatomer can only be recruited by membranes associated to ADP-ribosylation factors (ARFs), which are small GTP-binding proteins; the complex also influences the Golgi structural integrity, as well as the processing, activity, and endocytic recycling of LDL receptors. This Bos taurus (Bovine) protein is Coatomer subunit delta (ARCN1).